Consider the following 207-residue polypeptide: GTP cyclohydrolase 1 (207 aa).

Residues cysteine 88, histidine 91, and cysteine 162 each coordinate Zn(2+).

The protein belongs to the GTP cyclohydrolase I family. Toroid-shaped homodecamer, composed of two pentamers of five dimers.

The enzyme catalyses GTP + H2O = 7,8-dihydroneopterin 3'-triphosphate + formate + H(+). It participates in cofactor biosynthesis; 7,8-dihydroneopterin triphosphate biosynthesis; 7,8-dihydroneopterin triphosphate from GTP: step 1/1. The sequence is that of GTP cyclohydrolase 1 from Sulfurisphaera tokodaii (strain DSM 16993 / JCM 10545 / NBRC 100140 / 7) (Sulfolobus tokodaii).